The primary structure comprises 148 residues: Lysozyme C (148 aa).

The N-terminal stretch at Met1–Gly18 is a signal peptide. The region spanning Lys19 to Val148 is the C-type lysozyme domain. Disulfide bonds link Cys24-Cys146, Cys48-Cys134, Cys83-Cys99, and Cys95-Cys113. Active-site residues include Glu53 and Asp71.

It belongs to the glycosyl hydrolase 22 family. Monomer.

It carries out the reaction Hydrolysis of (1-&gt;4)-beta-linkages between N-acetylmuramic acid and N-acetyl-D-glucosamine residues in a peptidoglycan and between N-acetyl-D-glucosamine residues in chitodextrins.. Its function is as follows. Lysozymes have primarily a bacteriolytic function; those in tissues and body fluids are associated with the monocyte-macrophage system and enhance the activity of immunoagents. The chain is Lysozyme C (LYZ) from Callithrix jacchus (White-tufted-ear marmoset).